The sequence spans 396 residues: Elongation factor Tu (396 aa).

The 197-residue stretch at 10–206 folds into the tr-type G domain; sequence KEHVNIGTIG…AVDTWIETPV (197 aa). Positions 19–26 are G1; it reads GHVDHGKT. Position 19 to 26 (19 to 26) interacts with GTP; the sequence is GHVDHGKT. Thr26 serves as a coordination point for Mg(2+). The tract at residues 60 to 64 is G2; sequence GITIN. The tract at residues 81–84 is G3; that stretch reads DCPG. GTP-binding positions include 81 to 85 and 136 to 139; these read DCPGH and NKCD. Residues 136-139 are G4; sequence NKCD. The G5 stretch occupies residues 176-178; it reads SAL.

The protein belongs to the TRAFAC class translation factor GTPase superfamily. Classic translation factor GTPase family. EF-Tu/EF-1A subfamily. As to quaternary structure, monomer.

Its subcellular location is the cytoplasm. The enzyme catalyses GTP + H2O = GDP + phosphate + H(+). GTP hydrolase that promotes the GTP-dependent binding of aminoacyl-tRNA to the A-site of ribosomes during protein biosynthesis. The polypeptide is Elongation factor Tu (Mycoplasmopsis agalactiae (strain NCTC 10123 / CIP 59.7 / PG2) (Mycoplasma agalactiae)).